Consider the following 214-residue polypeptide: Probable nicotinate-nucleotide adenylyltransferase (214 aa).

It belongs to the NadD family.

It catalyses the reaction nicotinate beta-D-ribonucleotide + ATP + H(+) = deamido-NAD(+) + diphosphate. Its pathway is cofactor biosynthesis; NAD(+) biosynthesis; deamido-NAD(+) from nicotinate D-ribonucleotide: step 1/1. Functionally, catalyzes the reversible adenylation of nicotinate mononucleotide (NaMN) to nicotinic acid adenine dinucleotide (NaAD). In Pseudomonas paraeruginosa (strain DSM 24068 / PA7) (Pseudomonas aeruginosa (strain PA7)), this protein is Probable nicotinate-nucleotide adenylyltransferase.